Consider the following 699-residue polypeptide: eEF1A lysine and N-terminal methyltransferase (699 aa).

Met-1 is subject to N-acetylmethionine. Residue Ser-267 is modified to Phosphoserine. Residues 433–460 (VSHRAQKKRKKDRKKHRPADTPEDLPAA) are disordered. Positions 436–449 (RAQKKRKKDRKKHR) are enriched in basic residues.

This sequence belongs to the methyltransferase superfamily. Forms a tripartite complex containing GAB1, METTL13 and SPRY2. Within the complex interacts with GAB1 and SPRY2.

The protein localises to the cytoplasm. The protein resides in the nucleus. It localises to the mitochondrion. The catalysed reaction is L-lysyl-[protein] + S-adenosyl-L-methionine = N(6)-methyl-L-lysyl-[protein] + S-adenosyl-L-homocysteine + H(+). The enzyme catalyses N(6)-methyl-L-lysyl-[protein] + S-adenosyl-L-methionine = N(6),N(6)-dimethyl-L-lysyl-[protein] + S-adenosyl-L-homocysteine + H(+). It catalyses the reaction N-terminal glycyl-L-lysyl-L-glutamyl-[protein] + 3 S-adenosyl-L-methionine = N-terminal N,N,N-trimethyl-glycyl-L-lysyl-L-glutamyl-[protein] + 3 S-adenosyl-L-homocysteine + 3 H(+). Its function is as follows. Dual methyltransferase that catalyzes methylation of elongation factor 1-alpha (EEF1A1 and EEF1A2) at two different positions, and is therefore involved in the regulation of mRNA translation. Via its C-terminus, methylates EEF1A1 and EEF1A2 at the N-terminal residue 'Gly-2'. Via its N-terminus dimethylates EEF1A1 and EEF1A2 at residue 'Lys-55'. Has no activity towards core histones H2A, H2B, H3 and H4. In Bos taurus (Bovine), this protein is eEF1A lysine and N-terminal methyltransferase (METTL13).